Here is a 314-residue protein sequence, read N- to C-terminus: Vomeronasal type-1 receptor 95 (314 aa).

Topologically, residues 1–18 (MNKDNTLYCSAYRIAFFS) are extracellular. The chain crosses the membrane as a helical span at residues 19 to 39 (EIGIGISANSCLLLFHTFMFI). At 40–48 (RGHRPRLTD) the chain is on the cytoplasmic side. A helical transmembrane segment spans residues 49–69 (LPIGLVALIHLVMLLLAAYIT). Residues 70-88 (EDFFMSSGGWDDITCKLFI) are Extracellular-facing. C84 and C171 form a disulfide bridge. Residues 89 to 113 (FLHRFFRSLSVCDTCMLSVFQAIIL) traverse the membrane as a helical segment. Residues 114 to 133 (CPQSSHLAKFKLNSPHHLSC) are Cytoplasmic-facing. Residues 134-154 (FFIFMSIFYTSISSHILIAAI) traverse the membrane as a helical segment. The Extracellular segment spans residues 155 to 186 (ATQNLTSVNLIYITKSCSFLPMSSSMQRTFST). N158 carries N-linked (GlcNAc...) asparagine glycosylation. Residues 187–207 (LLAFRNVFLIGLMGLSTCYMA) traverse the membrane as a helical segment. Residues 208-235 (TLLCRHKTRSQQLQNSKLSPKATPEQRA) lie on the Cytoplasmic side of the membrane. The chain crosses the membrane as a helical span at residues 236–256 (IWTILMLMSFFLIISTFDSIM). At 257–268 (TYSRTIFQGNQS) the chain is on the extracellular side. The N-linked (GlcNAc...) asparagine glycan is linked to N266. A helical membrane pass occupies residues 269–289 (LYCVQIPVAHGYAAFSPLLVL). Residues 290 to 314 (NNEKRLTSLMISMYDRIVRLESLCS) are Cytoplasmic-facing.

It belongs to the G-protein coupled receptor 1 family.

The protein localises to the cell membrane. Putative pheromone receptor implicated in the regulation of social as well as reproductive behavior. The polypeptide is Vomeronasal type-1 receptor 95 (Vom1r95) (Rattus norvegicus (Rat)).